The chain runs to 391 residues: S-adenosylmethionine synthase (391 aa).

His14 provides a ligand contact to ATP. Asp16 lines the Mg(2+) pocket. Glu42 is a K(+) binding site. Glu55 and Gln98 together coordinate L-methionine. The flexible loop stretch occupies residues 98 to 108 (QSVDIAMGVDE). ATP contacts are provided by residues 172–174 (DGK), 238–239 (RF), Asp247, 253–254 (RK), Ala270, and Lys274. Asp247 contacts L-methionine. Lys278 is an L-methionine binding site.

This sequence belongs to the AdoMet synthase family. Homotetramer; dimer of dimers. It depends on Mg(2+) as a cofactor. Requires K(+) as cofactor.

The protein localises to the cytoplasm. The catalysed reaction is L-methionine + ATP + H2O = S-adenosyl-L-methionine + phosphate + diphosphate. The protein operates within amino-acid biosynthesis; S-adenosyl-L-methionine biosynthesis; S-adenosyl-L-methionine from L-methionine: step 1/1. Catalyzes the formation of S-adenosylmethionine (AdoMet) from methionine and ATP. The overall synthetic reaction is composed of two sequential steps, AdoMet formation and the subsequent tripolyphosphate hydrolysis which occurs prior to release of AdoMet from the enzyme. This chain is S-adenosylmethionine synthase, found in Clostridium botulinum (strain Hall / ATCC 3502 / NCTC 13319 / Type A).